The chain runs to 660 residues: Probable beta-hexosaminidase fdl (660 aa).

Positions 1-36 are cleaved as a signal peptide; it reads MSLAVSLRRALLVLLTGAIFILTVLYWNQGVTKAQA. N-linked (GlcNAc...) asparagine glycans are attached at residues N210, N412, and N452.

Belongs to the glycosyl hydrolase 20 family. As to expression, in third instar larval and early pupal brains, expressed in cells sending projections across the interhemispheric junction. In adult brain, expressed in mushroom body, ellipsoid body and pars intercerebralis.

It carries out the reaction Hydrolysis of terminal non-reducing N-acetyl-D-hexosamine residues in N-acetyl-beta-D-hexosaminides.. Involved in brain restructurization via hormonal control during metamorphosis. Implicated in N-glycan processing. This chain is Probable beta-hexosaminidase fdl (fdl), found in Drosophila melanogaster (Fruit fly).